Consider the following 64-residue polypeptide: NSGNPCCDPVTCKPRRGWHCVSNPCCDNCKFMRAGTICNRARGDDMNDYCTGISSDCPRNPYKD.

The 64-residue stretch at asparagine 1–aspartate 64 folds into the Disintegrin domain. 4 disulfides stabilise this stretch: cysteine 6-cysteine 29, cysteine 20-cysteine 26, cysteine 25-cysteine 50, and cysteine 38-cysteine 57. The Cell attachment site signature appears at arginine 42 to aspartate 44.

This sequence belongs to the disintegrin family. Dimeric disintegrin subfamily. In terms of assembly, heterodimer with subunit alpha; disulfide-linked. Expressed by the venom gland.

Its subcellular location is the secreted. Functionally, strongly inhibits ADP-induced platelet aggregation on human platelet-rich plasma. Also avidly binds to the laminin-binding beta-1 integrins (alpha-3/beta-1, alpha-6/beta-1, and alpha-7/beta-1) in an RGD-independent manner. The chain is Disintegrin lebein-1-beta from Macrovipera lebetinus (Levantine viper).